The following is a 212-amino-acid chain: Adenylate kinase (212 aa).

14–19 serves as a coordination point for ATP; sequence GSGKGT. Residues 34–63 are NMP; the sequence is STGDLFRKKISEDSRFAAQIQNYLSSGSYV. AMP is bound by residues Thr35, Arg40, 61-63, 89-92, and Gln96; these read SYV and GYPR. The interval 126-163 is LID; it reads QRLFCQKCQKSYNLLLAKPKNGLKCDLDNTDLITRNDD. Residue Arg127 coordinates ATP. Residues Cys130 and Cys133 each contribute to the Zn(2+) site. ATP is bound at residue 136-137; it reads SY. The Zn(2+) site is built by Cys150 and Asp153. 2 residues coordinate AMP: Arg160 and Arg171. Gln199 lines the ATP pocket.

Belongs to the adenylate kinase family. As to quaternary structure, monomer.

It is found in the cytoplasm. The catalysed reaction is AMP + ATP = 2 ADP. The protein operates within purine metabolism; AMP biosynthesis via salvage pathway; AMP from ADP: step 1/1. Catalyzes the reversible transfer of the terminal phosphate group between ATP and AMP. Plays an important role in cellular energy homeostasis and in adenine nucleotide metabolism. This Mesomycoplasma hyopneumoniae (strain 232) (Mycoplasma hyopneumoniae) protein is Adenylate kinase.